The following is a 271-amino-acid chain: GPN-loop GTPase 3 (271 aa).

13–18 is a GTP binding site; it reads GAGKST. Residues 70 to 72 carry the Gly-Pro-Asn (GPN)-loop; involved in dimer interface motif; sequence GPN. 173 to 176 contacts GTP; the sequence is SKVD.

This sequence belongs to the GPN-loop GTPase family. In terms of assembly, heterodimers with GPN1 or GPN2. Binds to RNA polymerase II (RNAPII).

Its function is as follows. Small GTPase required for proper nuclear import of RNA polymerase II and III (RNAPII and RNAPIII). May act at an RNAP assembly step prior to nuclear import. The polypeptide is GPN-loop GTPase 3 (Eremothecium gossypii (strain ATCC 10895 / CBS 109.51 / FGSC 9923 / NRRL Y-1056) (Yeast)).